The sequence spans 777 residues: Nuclear autoantigenic sperm protein (777 aa).

Position 2 is an N-acetylalanine (alanine 2). N6-acetyllysine is present on lysine 34. The TPR 1 repeat unit spans residues alanine 44–lysine 77. The segment at glutamate 117–serine 128 is histone-binding. Threonine 124 carries the post-translational modification Phosphothreonine. Serine 128 is modified (phosphoserine). Basic and acidic residues-rich tracts occupy residues methionine 152–methionine 186, valine 227–glycine 259, and isoleucine 267–lysine 276. Positions methionine 152–asparagine 496 are disordered. Positions glutamate 211–serine 244 are histone-binding. Lysine 243 is modified (N6-acetyllysine). Residue serine 244 is modified to Phosphoserine. Residue lysine 285 is modified to N6-acetyllysine. Positions aspartate 303 to alanine 319 are enriched in basic and acidic residues. Serine 312 is subject to Phosphoserine. Low complexity predominate over residues alanine 342–glutamate 353. Phosphoserine occurs at positions 399, 411, and 440. The segment at glutamate 458–isoleucine 501 is histone-binding. Residues glutamate 464–lysine 474 are compositionally biased toward acidic residues. Threonine 466 bears the Phosphothreonine mark. A phosphoserine mark is found at serine 469, serine 486, and serine 492. Residues asparagine 484–leucine 493 show a composition bias toward polar residues. TPR repeat units lie at residues alanine 531–tyrosine 564 and alanine 573–arginine 606. The stretch at valine 593–serine 648 forms a coiled coil. Residue serine 651 is modified to Phosphoserine. Positions serine 667–serine 681 are enriched in low complexity. Positions serine 667–cysteine 777 are disordered. Position 672 is a phosphothreonine (threonine 672). A phosphoserine mark is found at serine 694 and serine 695. Positions valine 705–proline 711 match the Nuclear localization signal motif. Residues lysine 710 to proline 728 show a composition bias toward basic and acidic residues. The residue at position 715 (serine 715) is a Phosphoserine. Residue lysine 725 forms a Glycyl lysine isopeptide (Lys-Gly) (interchain with G-Cter in SUMO1) linkage. Serine 734 bears the Phosphoserine mark.

This sequence belongs to the NASP family. Binds to linker H1 histones. Interacts with histones H2A, H2B, H3 and H4. Interacts with histone H3.3. Interacts with histones H3 and H4; NASP is a histone chaperone that stabilizes and maintains a soluble pool of histone H3-H4 dimers. Interacts with ASF1A and ASF1B; the interaction is probably indirect and mediated by H3-H4. Also binds to HSP90 in the cytoplasm. This interaction stimulates binding of NASP to H1-6/H1T.

The protein localises to the cytoplasm. It is found in the nucleus. Its function is as follows. Component of the histone chaperone network. Binds and stabilizes histone H3-H4 not bound to chromatin to maintain a soluble reservoir and modulate degradation by chaperone-mediated autophagy. Required for DNA replication, normal cell cycle progression and cell proliferation. Forms a cytoplasmic complex with HSP90 and H1 linker histones and stimulates HSP90 ATPase activity. NASP and H1 histone are subsequently released from the complex and translocate to the nucleus where the histone is released for binding to DNA. This is Nuclear autoantigenic sperm protein from Bos taurus (Bovine).